A 353-amino-acid polypeptide reads, in one-letter code: MTASLERRESASLWGRFCDWITSTENRLYIGWFGVLMIPTLLTATSVFIIAFIAAPPVDIDGIREPVSGSLLYGNNIISGAIIPTSAAIGLHFYPIWEAASVDEWLYNGGPYELIVLHFLLGVACYMGREWELSFRLGMRPWIAVAYSAPVAAAAAVFLIYPIGQGSFSDGMPLGISGTFNFMIVFQAEHNILMHPFHMLGVAGVFGGSLFSAMHGSLVTSSLIRETTENESANAGYKFGQEEETYNIVAAHGYFGRLIFQYASFNNSRSLHFFLAAWPVVGIWFTALGISTMAFNLNGFNFNQSVVDSQGRVINTWADIINRANLGMEVMHERNAHNFPLDLASVEAPSVKA.

Threonine 2 is subject to N-acetylthreonine. Residue threonine 2 is modified to Phosphothreonine. A run of 3 helical transmembrane segments spans residues 29–46 (YIGW…TATS), 118–133 (HFLL…EWEL), and 142–156 (WIAV…AAAA). A chlorophyll a-binding site is contributed by histidine 118. Residue tyrosine 126 participates in pheophytin a binding. Positions 170 and 189 each coordinate [CaMn4O5] cluster. A helical transmembrane segment spans residues 197-218 (FHMLGVAGVFGGSLFSAMHGSL). Histidine 198 is a binding site for chlorophyll a. A quinone contacts are provided by residues histidine 215 and 264 to 265 (SF). Histidine 215 provides a ligand contact to Fe cation. Histidine 272 serves as a coordination point for Fe cation. A helical membrane pass occupies residues 274–288 (FLAAWPVVGIWFTAL). Positions 332, 333, 342, and 344 each coordinate [CaMn4O5] cluster. The propeptide occupies 345 to 353 (SVEAPSVKA).

This sequence belongs to the reaction center PufL/M/PsbA/D family. In terms of assembly, PSII is composed of 1 copy each of membrane proteins PsbA, PsbB, PsbC, PsbD, PsbE, PsbF, PsbH, PsbI, PsbJ, PsbK, PsbL, PsbM, PsbT, PsbX, PsbY, PsbZ, Psb30/Ycf12, at least 3 peripheral proteins of the oxygen-evolving complex and a large number of cofactors. It forms dimeric complexes. The D1/D2 heterodimer binds P680, chlorophylls that are the primary electron donor of PSII, and subsequent electron acceptors. It shares a non-heme iron and each subunit binds pheophytin, quinone, additional chlorophylls, carotenoids and lipids. D1 provides most of the ligands for the Mn4-Ca-O5 cluster of the oxygen-evolving complex (OEC). There is also a Cl(-1) ion associated with D1 and D2, which is required for oxygen evolution. The PSII complex binds additional chlorophylls, carotenoids and specific lipids. is required as a cofactor. Tyr-161 forms a radical intermediate that is referred to as redox-active TyrZ, YZ or Y-Z. In terms of processing, C-terminally processed by CTPA; processing is essential to allow assembly of the oxygen-evolving complex and thus photosynthetic growth.

The protein localises to the plastid. It localises to the chloroplast thylakoid membrane. The enzyme catalyses 2 a plastoquinone + 4 hnu + 2 H2O = 2 a plastoquinol + O2. Photosystem II (PSII) is a light-driven water:plastoquinone oxidoreductase that uses light energy to abstract electrons from H(2)O, generating O(2) and a proton gradient subsequently used for ATP formation. It consists of a core antenna complex that captures photons, and an electron transfer chain that converts photonic excitation into a charge separation. The D1/D2 (PsbA/PsbD) reaction center heterodimer binds P680, the primary electron donor of PSII as well as several subsequent electron acceptors. This is Photosystem II protein D1 from Angiopteris evecta (Mule's foot fern).